The chain runs to 186 residues: Large ribosomal subunit protein uL5 (186 aa).

It belongs to the universal ribosomal protein uL5 family. In terms of assembly, part of the 50S ribosomal subunit; part of the 5S rRNA/L5/L18/L25 subcomplex. Contacts the 5S rRNA and the P site tRNA. Forms a bridge to the 30S subunit in the 70S ribosome.

Its function is as follows. This is one of the proteins that bind and probably mediate the attachment of the 5S RNA into the large ribosomal subunit, where it forms part of the central protuberance. In the 70S ribosome it contacts protein S13 of the 30S subunit (bridge B1b), connecting the 2 subunits; this bridge is implicated in subunit movement. Contacts the P site tRNA; the 5S rRNA and some of its associated proteins might help stabilize positioning of ribosome-bound tRNAs. The sequence is that of Large ribosomal subunit protein uL5 from Karelsulcia muelleri (strain GWSS) (Sulcia muelleri).